Reading from the N-terminus, the 240-residue chain is Glutathione S-transferase U9 (240 aa).

One can recognise a GST N-terminal domain in the interval 7–86 (NKVILHGSFA…YIDETWSNGP (80 aa)). Glutathione-binding positions include 17-18 (SP), 43-44 (NK), 57-58 (KI), and 70-71 (ES). The 135-residue stretch at 92–226 (DPYRRSKVRF…EQILEILRAF (135 aa)) folds into the GST C-terminal domain. Position 161 is a phosphothreonine (Thr-161).

Belongs to the GST superfamily. Tau family.

Its subcellular location is the cytoplasm. It localises to the cytosol. The catalysed reaction is RX + glutathione = an S-substituted glutathione + a halide anion + H(+). In terms of biological role, may be involved in the conjugation of reduced glutathione to a wide number of exogenous and endogenous hydrophobic electrophiles and have a detoxification role against certain herbicides. This Arabidopsis thaliana (Mouse-ear cress) protein is Glutathione S-transferase U9 (GSTU9).